We begin with the raw amino-acid sequence, 239 residues long: Probable transcriptional regulatory protein MG332 (239 aa).

Belongs to the TACO1 family.

The protein resides in the cytoplasm. The sequence is that of Probable transcriptional regulatory protein MG332 from Mycoplasma genitalium (strain ATCC 33530 / DSM 19775 / NCTC 10195 / G37) (Mycoplasmoides genitalium).